The primary structure comprises 159 residues: UPF0699 transmembrane protein YdbS (159 aa).

The next 2 helical transmembrane spans lie at 22–42 (IIIS…SYYF) and 47–67 (WISG…VFII).

The protein belongs to the UPF0699 family.

Its subcellular location is the cell membrane. The sequence is that of UPF0699 transmembrane protein YdbS (ydbS) from Bacillus subtilis (strain 168).